Here is a 26-residue protein sequence, read N- to C-terminus: DEAD-box ATP-dependent RNA helicase 1 (26 aa).

Positions Arg-1–Lys-10 match the Q motif motif. Asn-11–Thr-16 provides a ligand contact to ATP. Residues Asn-11–Lys-26 form the Helicase ATP-binding domain.

Belongs to the DEAD box helicase family. DDX6/DHH1 subfamily.

The protein localises to the cytoplasm. It localises to the P-body. It catalyses the reaction ATP + H2O = ADP + phosphate + H(+). In terms of biological role, ATP-dependent RNA helicase involved in mRNA turnover, and more specifically in mRNA decapping. This Catharanthus roseus (Madagascar periwinkle) protein is DEAD-box ATP-dependent RNA helicase 1.